The primary structure comprises 62 residues: U8-theraphotoxin-Cg1a 2 (62 aa).

Residues 1 to 21 form the signal peptide; that stretch reads MKTLVLFIIFGLAALFLLSSA. A propeptide spanning residues 22-29 is cleaved from the precursor; the sequence is TELEETER. Intrachain disulfides connect Cys-31–Cys-46, Cys-38–Cys-51, and Cys-45–Cys-58.

It belongs to the neurotoxin 10 (Hwtx-1) family. 30 (Jztx-14) subfamily. As to expression, expressed by the venom gland.

The protein localises to the secreted. In terms of biological role, probable ion channel inhibitor. The chain is U8-theraphotoxin-Cg1a 2 from Chilobrachys guangxiensis (Chinese earth tiger tarantula).